Consider the following 459-residue polypeptide: Glycosyl hydrolase family 109 protein 1 (459 aa).

The segment at residues methionine 1–alanine 31 is a signal peptide (tat-type signal). Residues glutamate 64–arginine 65, aspartate 86, tryptophan 135–histidine 138, glutamate 155–valine 156, and asparagine 184 each bind NAD(+). Substrate contacts are provided by residues tyrosine 213, arginine 232, tyrosine 244–histidine 247, and tyrosine 326. Tyrosine 244 provides a ligand contact to NAD(+).

Belongs to the Gfo/Idh/MocA family. Glycosyl hydrolase 109 subfamily. The cofactor is NAD(+). Post-translationally, predicted to be exported by the Tat system. The position of the signal peptide cleavage has not been experimentally proven.

Glycosidase. This Shewanella sp. (strain ANA-3) protein is Glycosyl hydrolase family 109 protein 1.